Consider the following 219-residue polypeptide: uncharacterized protein (219 aa).

Positions 1–26 (MNDRGVPNSRTGPSLLALLPAANSYA) are cleaved as a signal peptide. Disordered stretches follow at residues 36 to 57 (AVGVGGGSYKSPTRGSPGTRGG) and 88 to 219 (SGLG…GLCE). Residues 127-173 (LSPPSALGSSPAGRGRPAPAIAAAKSSPLSASAAPGRCGARPRAPSR) show a composition bias toward low complexity. Positions 176-202 (RERRPRGNPRAPLRRGARGRRRSHTRG) are enriched in basic residues.

This is an uncharacterized protein from Gallid herpesvirus 2 (strain Chicken/Md5/ATCC VR-987) (GaHV-2).